Here is a 329-residue protein sequence, read N- to C-terminus: Tryptophan--tRNA ligase (329 aa).

ATP contacts are provided by residues 9 to 11 and 17 to 18; these read QPS and GN. Positions 10-18 match the 'HIGH' region motif; it reads PSGIPTIGN. Asp-133 is a binding site for L-tryptophan. Residues 145-147, Val-184, and 193-197 each bind ATP; these read GDD and KMSKS. Positions 193–197 match the 'KMSKS' region motif; the sequence is KMSKS.

The protein belongs to the class-I aminoacyl-tRNA synthetase family. As to quaternary structure, homodimer.

It is found in the cytoplasm. The enzyme catalyses tRNA(Trp) + L-tryptophan + ATP = L-tryptophyl-tRNA(Trp) + AMP + diphosphate + H(+). In terms of biological role, catalyzes the attachment of tryptophan to tRNA(Trp). In Staphylococcus epidermidis (strain ATCC 35984 / DSM 28319 / BCRC 17069 / CCUG 31568 / BM 3577 / RP62A), this protein is Tryptophan--tRNA ligase.